The primary structure comprises 481 residues: Beta-1,3-glucan-binding protein (481 aa).

The N-terminal stretch at Arg1–Gly18 is a signal peptide. One can recognise a CBM39 domain in the interval Tyr20–Asp120. Asn110 carries N-linked (GlcNAc...) asparagine glycosylation. A GH16 domain is found at Thr124–Leu481.

The protein belongs to the insect beta-1,3-glucan binding protein family.

It localises to the secreted. Functionally, involved in the recognition of invading microorganisms. Binds specifically to beta-1,3-glucan and activates the phenoloxidase cascade. In Hyphantria cunea (Fall webworm moth), this protein is Beta-1,3-glucan-binding protein.